Reading from the N-terminus, the 307-residue chain is Protoheme IX farnesyltransferase (307 aa).

Transmembrane regions (helical) follow at residues 32-52 (MGIV…ALHF), 65-85 (FFTI…NNYI), 108-128 (PGFA…FLLL), 131-151 (PMAV…YSLW), 158-178 (LNTV…WAAI), 186-206 (IAWM…LALA), 251-271 (LGIT…VLGF), and 287-307 (FVYS…VTFF).

It belongs to the UbiA prenyltransferase family. Protoheme IX farnesyltransferase subfamily. As to quaternary structure, interacts with CtaA.

The protein localises to the cell membrane. The catalysed reaction is heme b + (2E,6E)-farnesyl diphosphate + H2O = Fe(II)-heme o + diphosphate. The protein operates within porphyrin-containing compound metabolism; heme O biosynthesis; heme O from protoheme: step 1/1. In terms of biological role, converts heme B (protoheme IX) to heme O by substitution of the vinyl group on carbon 2 of heme B porphyrin ring with a hydroxyethyl farnesyl side group. The sequence is that of Protoheme IX farnesyltransferase from Bacillus cereus (strain G9842).